Here is a 576-residue protein sequence, read N- to C-terminus: (+)-alpha-terpineol synthase (576 aa).

5 residues coordinate (2E)-geranyl diphosphate: R286, D323, D327, R466, and N469. Mg(2+) contacts are provided by D323 and D327. A DDXXD motif motif is present at residues 323-327 (DDVYD). Positions 469, 473, and 477 each coordinate Mg(2+).

Belongs to the terpene synthase family. Tpsb subfamily. Requires Mg(2+) as cofactor. The cofactor is Mn(2+).

The enzyme catalyses (2E,6E)-farnesyl diphosphate = beta-bisabolene + diphosphate. It catalyses the reaction (2E)-geranyl diphosphate + H2O = (R)-alpha-terpineol + diphosphate. It carries out the reaction (2E)-geranyl diphosphate = (4S)-limonene + diphosphate. Its pathway is secondary metabolite biosynthesis; terpenoid biosynthesis. Monoterpene synthase which catalyzes the conversion of (2E)-geranyl diphosphate (GPP) to (R)-alpha-terpineol and (4S)-limonene, as well as small quantities of linalool, myrcene, (-)-alpha-pinene, (+)-sabinene and geraniol. To a lower extent, catalyzes the conversion of (2E,6E)-farnesyl diphosphate (FPP) to beta-bisabolene. The sequence is that of (+)-alpha-terpineol synthase from Santalum album (White sandalwood).